Reading from the N-terminus, the 213-residue chain is Ribosomal RNA small subunit methyltransferase G (213 aa).

S-adenosyl-L-methionine-binding positions include Gly75, Phe80, 128-129 (IE), and Arg144.

This sequence belongs to the methyltransferase superfamily. RNA methyltransferase RsmG family.

The protein resides in the cytoplasm. It catalyses the reaction guanosine(527) in 16S rRNA + S-adenosyl-L-methionine = N(7)-methylguanosine(527) in 16S rRNA + S-adenosyl-L-homocysteine. Functionally, specifically methylates the N7 position of guanine in position 527 of 16S rRNA. In Brucella ovis (strain ATCC 25840 / 63/290 / NCTC 10512), this protein is Ribosomal RNA small subunit methyltransferase G.